We begin with the raw amino-acid sequence, 443 residues long: Xaa-Pro dipeptidase (443 aa).

Mn(2+) contacts are provided by aspartate 246, aspartate 257, histidine 339, glutamate 384, and glutamate 423.

This sequence belongs to the peptidase M24B family. Bacterial-type prolidase subfamily. The cofactor is Mn(2+).

It catalyses the reaction Xaa-L-Pro dipeptide + H2O = an L-alpha-amino acid + L-proline. Splits dipeptides with a prolyl residue in the C-terminal position. This is Xaa-Pro dipeptidase from Klebsiella pneumoniae subsp. pneumoniae (strain ATCC 700721 / MGH 78578).